Consider the following 65-residue polypeptide: Conotoxin Am6.4 (65 aa).

Residues 1–33 (STGKRNAGKLTVTDDVEADRDTDPDDKDPSVHN) are disordered. Positions 1 to 36 (STGKRNAGKLTVTDDVEADRDTDPDDKDPSVHNSWR) are excised as a propeptide. The span at 14 to 26 (DDVEADRDTDPDD) shows a compositional bias: acidic residues. 3 cysteine pairs are disulfide-bonded: cysteine 40-cysteine 50, cysteine 45-cysteine 59, and cysteine 49-cysteine 64.

Is not hydroxylated. Expressed by the venom duct.

Its subcellular location is the secreted. Functionally, probable toxin that inhibits ion channels. This chain is Conotoxin Am6.4, found in Conus amadis (Amadis cone).